Consider the following 122-residue polypeptide: Cofilin/actin-depolymerizing factor homolog 1 (122 aa).

An ADF-H domain is found at Gly-4–Lys-122.

The protein belongs to the actin-binding proteins ADF family. As to quaternary structure, interacts with monomeric actin, does not bind to actin polymers.

The protein resides in the cytoplasm. Its subcellular location is the cytoskeleton. Functionally, not involved in actin polymerisation, instead functions to stimulate nucleotide exchange on monomeric actin and influence turnover of the small amount of cytosolic actin microfilaments. Essential for erythrocytic schizogony. The chain is Cofilin/actin-depolymerizing factor homolog 1 from Plasmodium falciparum (isolate 3D7).